Here is a 311-residue protein sequence, read N- to C-terminus: MFTVDMVDTLFKYSKFMYECGNYTVASVCLYYYRNLVNQADPNYLNALYGKLASEILLQEWEHARDDLLKLRAYIDANPFDTEWELVTQRAWLMHWALFVYYNYPKGRDEIIEMFLNQQPYLNAIQVLAPHLLRYLAVAVVTSKSRQKNSLKDLVKVIDIERHSYKDPVTDFLTCLYIKYDFDEAQEMLQKCEEVLSNDFFLTAVLGDFRESARLLIFEMFCRIHQCITIEMLARRLNMSQEEAERWIVDLIRTYRIEGAKIDSKLGQVVMGVKSVSIHEQVMENTKRLTLRAQQIALQLEKGRQDKVKAN.

Positions 100-280 (VYYNYPKGRD…MGVKSVSIHE (181 aa)) constitute a PCI domain.

The protein belongs to the eIF-3 subunit E family. In terms of assembly, component of the eukaryotic translation initiation factor 3 (eIF-3) complex.

Its subcellular location is the cytoplasm. Its function is as follows. Component of the eukaryotic translation initiation factor 3 (eIF-3) complex, which is involved in protein synthesis of a specialized repertoire of mRNAs and, together with other initiation factors, stimulates binding of mRNA and methionyl-tRNAi to the 40S ribosome. The eIF-3 complex specifically targets and initiates translation of a subset of mRNAs involved in cell proliferation. The chain is Eukaryotic translation initiation factor 3 subunit E from Caenorhabditis briggsae.